Here is an 83-residue protein sequence, read N- to C-terminus: MSDKTRLLEGKVSSVAMDKTVVVRAERYVKHPLYGKFVKKTTKYYVHDENNECKEGDVIKFKETRPYSKTKKWCLVDIIHREK.

It belongs to the universal ribosomal protein uS17 family. In terms of assembly, part of the 30S ribosomal subunit.

Functionally, one of the primary rRNA binding proteins, it binds specifically to the 5'-end of 16S ribosomal RNA. This Francisella tularensis subsp. holarctica (strain FTNF002-00 / FTA) protein is Small ribosomal subunit protein uS17.